The following is a 560-amino-acid chain: Leucine-rich repeat and IQ domain-containing protein 4 (560 aa).

A disordered region spans residues 1 to 20; that stretch reads MSKDIKSVEHSPKIHQRNDP. 20 LRR repeats span residues 23 to 47, 48 to 70, 72 to 95, 97 to 116, 117 to 140, 141 to 164, 166 to 187, 188 to 210, 212 to 233, 234 to 256, 258 to 281, 283 to 301, 302 to 325, 326 to 348, 350 to 371, 374 to 397, 398 to 422, 424 to 443, 444 to 466, and 468 to 489; these read VNDR…IFTF, TELE…IQRL, NIRV…LLSS, ESLD…VVSF, LHAL…IFKN, LHHL…IVNQ, KLRE…LCVL, YTLE…IGHL, GLQK…LCQC, SQLS…FAEL, KMTE…RWTS, HLLY…SFRC, LVNL…ICAL, KNLE…LGSL, KLKI…VLSL, LEKL…IRKL, QSLK…SMPN, EVLD…ICQA, QALK…LDSL, and NLKV…VCAE. The IQ domain maps to 504–533; it reads RNIMATKIQAWWRGTMVQRGFGKFGELLKP. A disordered region spans residues 529–560; that stretch reads ELLKPQKKGKTSPKDKKGKKDVKGKPGKGKKK. Residues 533–560 are compositionally biased toward basic residues; it reads PQKKGKTSPKDKKGKKDVKGKPGKGKKK.

The sequence is that of Leucine-rich repeat and IQ domain-containing protein 4 (LRRIQ4) from Homo sapiens (Human).